Consider the following 612-residue polypeptide: MDDHKPIETPDGPAVDTPGIGARRYETPPTELPITEAEAARAAGLAHNEHLKIASGYLRGGLADGLLKHATGAISEDDGQLVKFHGMYMQDDRDIRAERTKKKLEKAYSFMIRLRIAGGVVTPKQWLILDNIATTYAGSALRATTRQTFQYHGVIKSNLKRTMAAIDSALLDTIAACGDVNRNVMAATNPAQAGAHKIALQLAKDISDTLLPKTGAWREIWLDGERVVGGEDAAEVEPVYGKTYLPRKFKTVVAVPPSNEVDIFAHDLGFIAILDKKNRVTGWNVTVGGGMGMTHGEADTFPRTADVLGFVQPEDALKAAEAVMTVQRDWGNRKNRKNARLKYTIERFGLDAFRAEVEKRIGKKLGAPKPFTFDGNGDRYGWVEGDDGRHHLTLYVPSGRIKDIEGGPQFLSGLRRIAEVHEGDFRLTGNQNVIIANVPAGKRAEIDALVDEYGLTRGASALRRNSMACVALPTCGLALAESERYLPDLLSELEESLARHGLQDEPITIRSTGCPNGCARPFISEIGLVGRGPERYHLYLGAAFDGSRLSKLYREDVTASEITGTLDPLFAAYAKDRQPGEHFGDFVIRAGFVAKTSNGPDFHERTGPLRAA.

The segment at 1-26 (MDDHKPIETPDGPAVDTPGIGARRYE) is disordered. 4 residues coordinate [4Fe-4S] cluster: Cys469, Cys475, Cys514, and Cys518. Position 518 (Cys518) interacts with siroheme.

The protein belongs to the nitrite and sulfite reductase 4Fe-4S domain family. Alpha(8)-beta(8). The alpha component is a flavoprotein, the beta component is a hemoprotein. Siroheme serves as cofactor. The cofactor is [4Fe-4S] cluster.

It catalyses the reaction hydrogen sulfide + 3 NADP(+) + 3 H2O = sulfite + 3 NADPH + 4 H(+). It participates in sulfur metabolism; hydrogen sulfide biosynthesis; hydrogen sulfide from sulfite (NADPH route): step 1/1. Functionally, component of the sulfite reductase complex that catalyzes the 6-electron reduction of sulfite to sulfide. This is one of several activities required for the biosynthesis of L-cysteine from sulfate. The chain is Sulfite reductase [NADPH] hemoprotein beta-component from Methylorubrum extorquens (strain CM4 / NCIMB 13688) (Methylobacterium extorquens).